A 125-amino-acid polypeptide reads, in one-letter code: Hydrogenase maturation factor HypA (125 aa).

His-2 lines the Ni(2+) pocket. Zn(2+) is bound by residues Cys-73, Cys-76, Cys-96, and Cys-99.

The protein belongs to the HypA/HybF family.

Functionally, involved in the maturation of [NiFe] hydrogenases. Required for nickel insertion into the metal center of the hydrogenase. This is Hydrogenase maturation factor HypA from Methanobrevibacter smithii (strain ATCC 35061 / DSM 861 / OCM 144 / PS).